Here is a 301-residue protein sequence, read N- to C-terminus: Multifunctional dioxygenase prhA (301 aa).

The Fe cation site is built by His130, Asp132, and His214.

It belongs to the PhyH family. As to quaternary structure, homodimer. Fe cation is required as a cofactor.

The catalysed reaction is preaustinoid A1 + 2-oxoglutarate + O2 = berkeleyone B + succinate + CO2 + H2O. It carries out the reaction berkeleyone B + 2-oxoglutarate + O2 = berkeleydione + succinate + CO2 + H2O. It catalyses the reaction preaustinoid A + 2 2-oxoglutarate + 2 O2 = berkeleytrione + 2 succinate + 2 CO2 + H2O. Its pathway is secondary metabolite biosynthesis; terpenoid biosynthesis. Multifunctional dioxygenase; part of the gene cluster that mediates the biosynthesis of paraherquonin, a meroterpenoid with a unique, highly congested hexacyclic molecular architecture. The first step of the pathway is the synthesis of 3,5-dimethylorsellinic acid (DMOA) by the polyketide synthase prhL. Synthesis of DMOA is followed by farnesylation by the prenyltransferase prhE, methylesterification by the methyl-transferase prhM, epoxidation of the prenyl chain by the flavin-dependent monooxygenase prhF, and cyclization of the farnesyl moiety by the terpene cyclase prhH, to yield the tetracyclic intermediate, protoaustinoid A. The short chain dehydrogenase prhI then oxidizes the C-3 alcohol group of the terpene cyclase product to transform protoaustinoid A into protoaustinoid B. The FAD-binding monooxygenase prhJ catalyzes the oxidation of protoaustinoid B into preaustinoid A which is further oxidized into preaustinoid A1 by FAD-binding monooxygenase phrK. Finally, prhA leads to berkeleydione via the berkeleyone B intermediate. PrhA is a multifunctional dioxygenase that first desaturates at C5-C6 to form berkeleyone B, followed by rearrangement of the A/B-ring to form the cycloheptadiene moiety in berkeleydione. Berkeleydione serves as the key intermediate for the biosynthesis of paraherquonin as well as many other meroterpenoids. The cytochrome P450 monooxygenases prhB, prhD, and prhN, as well as the isomerase prhC, are probably involved in the late stage of paraherquonin biosynthesis, after the production of berkeleydione. Especially prhC might be a multifunctional enzyme that catalyzes the D-ring expansion via intramolecular methoxy rearrangement, as well as the hydrolysis of the expanded D-ring. The protein is Multifunctional dioxygenase prhA of Penicillium brasilianum.